A 445-amino-acid polypeptide reads, in one-letter code: Rab GDP dissociation inhibitor beta (445 aa).

M1 bears the N-acetylmethionine mark. Position 112 is an N6-acetyllysine (K112). At S130 the chain carries Phosphoserine. At K269 the chain carries N6-acetyllysine. S382 is modified (phosphoserine).

This sequence belongs to the Rab GDI family. As to quaternary structure, interacts with RHOH. Interacts with the GDP-bound inactive forms of RAB3A, RAB3B, RAB3C, RAB5A, RAB5B, RAB5C, RAB8A, RAB8B, RAB10, RAB12, RAB35, and RAB43; binds RAB3D to a lesser extent. Interacts with DZIP1; this interaction negatively regulates the interaction of GDI2 with GDP-bound RAB8A.

The protein localises to the cytoplasm. Its subcellular location is the membrane. It localises to the golgi apparatus. It is found in the trans-Golgi network. Its function is as follows. GDP-dissociation inhibitor preventing the GDP to GTP exchange of most Rab proteins. By keeping these small GTPases in their inactive GDP-bound form regulates intracellular membrane trafficking. Negatively regulates protein transport to the cilium and ciliogenesis through the inhibition of RAB8A. In Sus scrofa (Pig), this protein is Rab GDP dissociation inhibitor beta (GDI2).